The following is a 675-amino-acid chain: Methionine--tRNA ligase (675 aa).

The 'HIGH' region signature appears at proline 15–histidine 25. Residues cysteine 146, cysteine 149, cysteine 159, and cysteine 162 each contribute to the Zn(2+) site. Positions lysine 332–serine 336 match the 'KMSKS' region motif. Residue lysine 335 coordinates ATP. One can recognise a tRNA-binding domain in the interval aspartate 574–lysine 675.

This sequence belongs to the class-I aminoacyl-tRNA synthetase family. MetG type 1 subfamily. As to quaternary structure, homodimer. Zn(2+) is required as a cofactor.

It is found in the cytoplasm. The catalysed reaction is tRNA(Met) + L-methionine + ATP = L-methionyl-tRNA(Met) + AMP + diphosphate. Is required not only for elongation of protein synthesis but also for the initiation of all mRNA translation through initiator tRNA(fMet) aminoacylation. The polypeptide is Methionine--tRNA ligase (Tolumonas auensis (strain DSM 9187 / NBRC 110442 / TA 4)).